Consider the following 87-residue polypeptide: Putative regulatory protein GTNG_1019 (87 aa).

The protein belongs to the RemA family.

The chain is Putative regulatory protein GTNG_1019 from Geobacillus thermodenitrificans (strain NG80-2).